The chain runs to 182 residues: Ribosome-recycling factor (182 aa).

Belongs to the RRF family.

It localises to the cytoplasm. Its function is as follows. Responsible for the release of ribosomes from messenger RNA at the termination of protein biosynthesis. May increase the efficiency of translation by recycling ribosomes from one round of translation to another. The sequence is that of Ribosome-recycling factor from Prochlorococcus marinus (strain MIT 9313).